The sequence spans 428 residues: Histidinol dehydrogenase (428 aa).

NAD(+) is bound by residues Tyr126, Gln188, and Asn211. The substrate site is built by Ser234, Gln256, and His259. Residues Gln256 and His259 each contribute to the Zn(2+) site. Active-site proton acceptor residues include Glu324 and His325. Substrate is bound by residues His325, Asp358, Glu412, and His417. A Zn(2+)-binding site is contributed by Asp358. Position 417 (His417) interacts with Zn(2+).

Belongs to the histidinol dehydrogenase family. Zn(2+) serves as cofactor.

It carries out the reaction L-histidinol + 2 NAD(+) + H2O = L-histidine + 2 NADH + 3 H(+). The protein operates within amino-acid biosynthesis; L-histidine biosynthesis; L-histidine from 5-phospho-alpha-D-ribose 1-diphosphate: step 9/9. Its function is as follows. Catalyzes the sequential NAD-dependent oxidations of L-histidinol to L-histidinaldehyde and then to L-histidine. The sequence is that of Histidinol dehydrogenase from Chlorobium chlorochromatii (strain CaD3).